Consider the following 477-residue polypeptide: Ubiquinone biosynthesis monooxygenase COQ6, mitochondrial (477 aa).

The N-terminal 25 residues, Met-1–Leu-25, are a transit peptide targeting the mitochondrion.

It belongs to the UbiH/COQ6 family. In terms of assembly, component of a multi-subunit COQ enzyme complex. The cofactor is FAD.

It is found in the mitochondrion inner membrane. The enzyme catalyses a 4-hydroxy-3-(all-trans-polyprenyl)benzoate + 2 reduced [2Fe-2S]-[ferredoxin] + O2 + 2 H(+) = a 3,4-dihydroxy-5-(all-trans-polyprenyl)benzoate + 2 oxidized [2Fe-2S]-[ferredoxin] + H2O. It carries out the reaction a 2-methoxy-6-(all-trans-polyprenyl)phenol + 2 reduced [2Fe-2S]-[ferredoxin] + O2 + 2 H(+) = a 2-methoxy-6-(all-trans-polyprenyl)benzene-1,4-diol + 2 oxidized [2Fe-2S]-[ferredoxin] + H2O. It functions in the pathway cofactor biosynthesis; ubiquinone biosynthesis. FAD-dependent monooxygenase required for two non-consecutive steps during ubiquinone biosynthesis. Required for the C5-ring hydroxylation during ubiquinone biosynthesis by catalyzing the hydroxylation of 4-hydroxy-3-(all-trans-polyprenyl)benzoic acid to 3,4-dihydroxy-5-(all-trans-polyprenyl)benzoic acid. Also acts downstream of coq4, for the C1-hydroxylation during ubiquinone biosynthesis by catalyzing the hydroxylation of 2-methoxy-6-(all-trans-polyprenyl)phenol to 2-methoxy-6-(all-trans-polyprenyl)benzene-1,4-diol. The electrons required for the hydroxylation reaction are funneled indirectly to Coq6 from NADPH via a ferredoxin/ferredoxin reductase system. The polypeptide is Ubiquinone biosynthesis monooxygenase COQ6, mitochondrial (Drosophila melanogaster (Fruit fly)).